Reading from the N-terminus, the 87-residue chain is uncharacterized protein (87 aa).

This is an uncharacterized protein from Saccharomyces cerevisiae (strain ATCC 204508 / S288c) (Baker's yeast).